We begin with the raw amino-acid sequence, 92 residues long: Small ribosomal subunit protein uS19 (92 aa).

This sequence belongs to the universal ribosomal protein uS19 family.

Protein S19 forms a complex with S13 that binds strongly to the 16S ribosomal RNA. The sequence is that of Small ribosomal subunit protein uS19 from Treponema denticola (strain ATCC 35405 / DSM 14222 / CIP 103919 / JCM 8153 / KCTC 15104).